Here is a 173-residue protein sequence, read N- to C-terminus: MELKMLRKIINNIEEIITVPLMAALLAVLTWQIGTRWLLNDPSLWSEELARLLFMYMCLVGCAIAIKRSSHVNITFFSDKLPEKARLSLVLSLEIAVLVSIGAIIVLGYQHAQRNAFFELITLGISSSWMNYSLPVGGVFMVFRQLEKIFNLMKLLLGVSSSASLIDQQVTER.

A run of 4 helical transmembrane segments spans residues 13–33 (IEEIITVPLMAALLAVLTWQI), 46–66 (SEELARLLFMYMCLVGCAIAI), 87–107 (LSLVLSLEIAVLVSIGAIIVL), and 123–143 (LGISSSWMNYSLPVGGVFMVF).

The protein belongs to the TRAP transporter small permease family. As to quaternary structure, the complex comprises the extracytoplasmic solute receptor protein SiaP, and the two transmembrane proteins SiaQ and SiaM. SiaQ and SiaM form a tight 1:1 complex.

The protein localises to the cell inner membrane. In terms of biological role, part of the tripartite ATP-independent periplasmic (TRAP) transport system SiaPQM that catalyzes unidirectional Na(+)-dependent sialic acid uptake. The sequence is that of Sialic acid TRAP transporter small permease protein SiaQ from Vibrio cholerae serotype O1 (strain ATCC 39315 / El Tor Inaba N16961).